We begin with the raw amino-acid sequence, 268 residues long: Thiazole synthase (268 aa).

The active-site Schiff-base intermediate with DXP is the K100. Residues G161, 187 to 188 (AG), and 209 to 210 (NT) each bind 1-deoxy-D-xylulose 5-phosphate. The disordered stretch occupies residues 248–268 (ASPSSPAEGMFTGTQHPAANS). The span at 259 to 268 (TGTQHPAANS) shows a compositional bias: polar residues.

This sequence belongs to the ThiG family. Homotetramer. Forms heterodimers with either ThiH or ThiS.

It is found in the cytoplasm. The enzyme catalyses [ThiS sulfur-carrier protein]-C-terminal-Gly-aminoethanethioate + 2-iminoacetate + 1-deoxy-D-xylulose 5-phosphate = [ThiS sulfur-carrier protein]-C-terminal Gly-Gly + 2-[(2R,5Z)-2-carboxy-4-methylthiazol-5(2H)-ylidene]ethyl phosphate + 2 H2O + H(+). It participates in cofactor biosynthesis; thiamine diphosphate biosynthesis. In terms of biological role, catalyzes the rearrangement of 1-deoxy-D-xylulose 5-phosphate (DXP) to produce the thiazole phosphate moiety of thiamine. Sulfur is provided by the thiocarboxylate moiety of the carrier protein ThiS. In vitro, sulfur can be provided by H(2)S. The chain is Thiazole synthase from Nitrosomonas europaea (strain ATCC 19718 / CIP 103999 / KCTC 2705 / NBRC 14298).